A 2563-amino-acid polypeptide reads, in one-letter code: Compactin diketide synthase mlcB (2563 aa).

Residues 29 to 450 (STPIAIVGMG…GSNAHVILES (422 aa)) enclose the Ketosynthase family 3 (KS3) domain. Catalysis depends on for beta-ketoacyl synthase activity residues C202, H337, and H372. Positions 568–915 (VFTGQGAQWH…TELISKGYGL (348 aa)) are acyl and malonyl transferase. S658 serves as the catalytic For malonyltransferase activity. The span at 951–960 (EPRGSRESKQ) shows a compositional bias: basic and acidic residues. Residues 951-971 (EPRGSRESKQRTHPPHTLIGS) are disordered. The N-terminal hotdog fold stretch occupies residues 966 to 1103 (HTLIGSRESL…GLIRSESERS (138 aa)). The region spanning 966–1284 (HTLIGSRESL…FQSVGSSFSD (319 aa)) is the PKS/mFAS DH domain. H998 serves as the catalytic Proton acceptor; for dehydratase activity. The segment at 998-1010 (HVVGSSIIFPGAG) is dehydratase-like. Residues 1121–1284 (DNRSIDPNDL…FQSVGSSFSD (164 aa)) form a C-terminal hotdog fold region. The active-site Proton donor; for dehydratase activity is the D1187. The tract at residues 1542-1579 (YDVVVACQVLHATRCMKRTLSNVRKLLKPGGNLILVET) is methyltransferase. The region spanning 2485 to 2562 (EAISIVLKAM…GLVELVVAKC (78 aa)) is the Carrier domain. At S2522 the chain carries O-(pantetheine 4'-phosphoryl)serine.

Requires pantetheine 4'-phosphate as cofactor.

It carries out the reaction holo-[2-methylbutanoate polyketide synthase] + 2 malonyl-CoA + S-adenosyl-L-methionine + 2 NADPH + 3 H(+) = (S)-2-methylbutanoyl-[2-methylbutanoate polyketide synthase] + S-adenosyl-L-homocysteine + 2 CO2 + 2 NADP(+) + 2 CoA + H2O. The protein operates within polyketide biosynthesis. Diketide synthase; part of the gene cluster that mediates the biosynthesis of compactin, also known as mevastatin or ML-236B, and which acts as a potent competitive inhibitor of HMG-CoA reductase. Compactin biosynthesis is performed in two stages. The first stage is catalyzed by the nonaketide synthase mlcA, which belongs to type I polyketide synthases and catalyzes the iterative nine-step formation of the polyketide. This PKS stage is completed by the action of dehydrogenase mlcG, which catalyzes the NADPH-dependent reduction of the unsaturated tetra-, penta- and heptaketide intermediates that arise during the mlcA-mediated biosynthesis of the nonaketide chain and leads to dihydro-ML-236C carboxylate. Covalently bound dihydro-ML-236C carboxylate is released from mlcA by the mlcF esterase. Conversion of dihydro-ML-236C carboxylate into ML-236A carboxylate is subsequently performed with the participation of molecular oxygen and P450 monoogygenase mlcC. Finally, mlcH performs the conversion of ML-236A carboxylate to ML-236B/compactin carboxylate through the addition of the side-chain diketide moiety produced by the diketide synthase mlcB. In Penicillium citrinum, this protein is Compactin diketide synthase mlcB (mlcB).